We begin with the raw amino-acid sequence, 429 residues long: Probable M18 family aminopeptidase 2 (429 aa).

Residues H82, H156, and H401 each coordinate Zn(2+).

This sequence belongs to the peptidase M18 family. Zn(2+) serves as cofactor.

The protein is Probable M18 family aminopeptidase 2 of Pseudomonas aeruginosa (strain LESB58).